A 230-amino-acid chain; its full sequence is Ribonuclease 3 (230 aa).

The 134-residue stretch at Met1–Gly134 folds into the RNase III domain. Glu47 provides a ligand contact to Mg(2+). Asp51 is an active-site residue. Mg(2+) contacts are provided by Asp120 and Glu123. Glu123 is an active-site residue. The DRBM domain maps to Asp160–Glu229.

The protein belongs to the ribonuclease III family. In terms of assembly, homodimer. The cofactor is Mg(2+).

The protein resides in the cytoplasm. It carries out the reaction Endonucleolytic cleavage to 5'-phosphomonoester.. Its function is as follows. Digests double-stranded RNA. Involved in the processing of primary rRNA transcript to yield the immediate precursors to the large and small rRNAs (23S and 16S). Processes some mRNAs, and tRNAs when they are encoded in the rRNA operon. Processes pre-crRNA and tracrRNA of type II CRISPR loci if present in the organism. In Streptococcus pyogenes serotype M28 (strain MGAS6180), this protein is Ribonuclease 3.